Here is a 283-residue protein sequence, read N- to C-terminus: Non-selective voltage-gated ion channel VDAC3 (283 aa).

An N-acetylcysteine modification is found at cysteine 2. Threonine 4 is subject to Phosphothreonine. Residues lysine 12, lysine 15, and lysine 20 each carry the N6-acetyllysine modification. Beta stranded transmembrane passes span 26-35 (MVKIDLKTKS) and 39-47 (VEFSTSGHA). Residue lysine 53 forms a Glycyl lysine isopeptide (Lys-Gly) (interchain with G-Cter in ubiquitin) linkage. 3 beta stranded membrane passes run 54 to 64 (ASGNLETKYKV), 69 to 76 (LTFTQKWN), and 80 to 89 (TLGTEISWEN). At lysine 90 the chain carries N6-acetyllysine. The beta stranded transmembrane segment at 95 to 104 (LKLTLDTIFV) threads the bilayer. Residues lysine 109 and lysine 110 each participate in a glycyl lysine isopeptide (Lys-Gly) (interchain with G-Cter in ubiquitin) cross-link. Transmembrane regions (beta stranded) follow at residues 111 to 120 (SGKLKASYRR), 123 to 130 (FSLGSNVD), 137 to 145 (TIYGWAVLA), 150 to 158 (LAGYQMSFD), 163 to 175 (KLSQNNFALGYKA), 178 to 185 (FQLHTHVN), 189 to 198 (EFGGSIYQKV), 202 to 211 (IETSINLAWT), 218 to 227 (RFGIAAKYKL), and 231 to 238 (TSLSAKVN). A Phosphoserine modification is found at serine 241. Residues 242–244 (LIG) and 260–264 (SALID) each bind NAD(+). A run of 2 beta stranded transmembrane segments spans residues 242 to 251 (LIGLGYTQTL) and 254 to 263 (GVKLTLSALI). Lysine 266 is subject to N6-acetyllysine; alternate. Lysine 266 is covalently cross-linked (Glycyl lysine isopeptide (Lys-Gly) (interchain with G-Cter in ubiquitin); alternate). The beta stranded transmembrane segment at 273–282 (HKVGLGFELE) threads the bilayer.

The protein belongs to the eukaryotic mitochondrial porin family. In terms of assembly, interacts with ARMC12 in a TBC1D21-dependent manner. Interacts with MISFA. Post-translationally, ubiquitinated by PRKN during mitophagy, leading to its degradation and enhancement of mitophagy. Deubiquitinated by USP30. Highest levels of expression detected in testis, less but still abundant expression in heart, kidney, brain, and skeletal muscle.

It is found in the mitochondrion outer membrane. Its subcellular location is the membrane. It carries out the reaction chloride(in) = chloride(out). The catalysed reaction is K(+)(in) = K(+)(out). Its function is as follows. Non-selective voltage-gated ion channel that mediates the transport of anions and cations through the mitochondrion outer membrane and plasma membrane. Forms a high-conducting channel with a stable open state and a voltage-induced closure with a mild preference for anions over cations. Involved in male fertility and sperm mitochondrial sheath formation. The chain is Non-selective voltage-gated ion channel VDAC3 from Mus musculus (Mouse).